The chain runs to 111 residues: Nucleoid-associated protein CYA_1369 (111 aa).

The protein belongs to the YbaB/EbfC family. Homodimer.

The protein resides in the cytoplasm. Its subcellular location is the nucleoid. In terms of biological role, binds to DNA and alters its conformation. May be involved in regulation of gene expression, nucleoid organization and DNA protection. In Synechococcus sp. (strain JA-3-3Ab) (Cyanobacteria bacterium Yellowstone A-Prime), this protein is Nucleoid-associated protein CYA_1369.